We begin with the raw amino-acid sequence, 1133 residues long: Sterol regulatory element-binding protein 2 (1133 aa).

Residues 1-50 (MDENSELGGLETMETLTELGDELTLGDIDEMLQFVSNQVGEFSDLFSEQL) are transcriptional activation (acidic). Topologically, residues 1–473 (MDENSELGGL…VALGMVDRSR (473 aa)) are cytoplasmic. Residues 56–65 (GGGGGSGSGG) are compositionally biased toward gly residues. Residues 56 to 136 (GGGGGSGSGG…PQPQPQPPAQ (81 aa)) are disordered. Residues 92–109 (PLSTFSPSSTSPQAPALQ) show a composition bias toward low complexity. Positions 114-134 (PTPPRATPVLQPRPQPQPQPP) are enriched in pro residues. The interaction with LMNA stretch occupies residues 229 to 483 (QQVPVLVQPQ…ILLCVLTFLG (255 aa)). The region spanning 322–372 (ERRTTHNIIEKRYRSSINDKIIELKDLVMGTDAKMHKSGVLRKAIDYIKYL) is the bHLH domain. The tract at residues 372–393 (LQQVNHKLRQENMVLKLANQKN) is leucine-zipper. A Glycyl lysine isopeptide (Lys-Gly) (interchain with G-Cter in SUMO2) cross-link involves residue K456. The helical transmembrane segment at 474 to 494 (ILLCVLTFLGLSFNPLTSLLQ) threads the bilayer. The Lumenal segment spans residues 495 to 525 (WGGAHNPDQHPYSGSGRNVLSLESGSGGWFD). The chain crosses the membrane as a helical span at residues 526–546 (WMMPTLLLWLLNGVIVLSVFV). Residues 547 to 1133 (KLLVHGEPVI…LGGGTAIAAS (587 aa)) are Cytoplasmic-facing. Position 1090 is a phosphoserine (S1090).

This sequence belongs to the SREBP family. Homodimer; efficient DNA binding of the soluble transcription factor fragment requires dimerization with another bHLH protein. Interacts with LMNA. As to quaternary structure, forms a tight complex with SCAP, the SCAP-SREBP complex, in the endoplasmic reticulum membrane and the Golgi apparatus. Interacts with PAQR3; the interaction anchors the SCAP-SREBP complex to the Golgi apparatus in low cholesterol conditions. Interacts (via C-terminal domain) with RNF139. In terms of processing, processed in the Golgi apparatus, releasing the protein from the membrane. At low cholesterol the SCAP-SREBP complex is recruited into COPII vesicles for export from the endoplasmic reticulum. In the Golgi, complex SREBPs are cleaved sequentially by site-1 (MBTPS1, S1P) and site-2 (MBTPS2, S2P) proteases. The first cleavage by site-1 protease occurs within the luminal loop, the second cleavage by site-2 protease occurs within the first transmembrane domain, releasing the transcription factor from the Golgi membrane. Apoptosis triggers cleavage by the cysteine proteases caspase-3 and caspase-7. Cleavage and activation is induced by mediated cholesterol efflux. Phosphorylated by AMPK, leading to suppress protein processing and nuclear translocation, and repress target gene expression. Post-translationally, SCAP-free SREBF2 is ubiquitinated by the BCR(ARMC5) complex, leading to its degradation. In terms of processing, ubiquitinated; the nuclear form has a rapid turnover and is rapidly ubiquitinated and degraded by the proteasome in the nucleus.

The protein localises to the endoplasmic reticulum membrane. Its subcellular location is the golgi apparatus membrane. It is found in the cytoplasmic vesicle. The protein resides in the COPII-coated vesicle membrane. It localises to the nucleus. Its activity is regulated as follows. Activation by cleavage is down-regulated upon activation of SIRT3-dependent PRKAA1/AMPK-alpha signaling cascade which leads to inhibition of ATP-consuming lipogenesis to restore cellular energy balance. In terms of biological role, precursor of the transcription factor form (Processed sterol regulatory element-binding protein 2), which is embedded in the endoplasmic reticulum membrane. Low sterol concentrations promote processing of this form, releasing the transcription factor form that translocates into the nucleus and activates transcription of genes involved in cholesterol biosynthesis. Key transcription factor that regulates expression of genes involved in cholesterol biosynthesis. Binds to the sterol regulatory element 1 (SRE-1) (5'-ATCACCCCAC-3'). Has dual sequence specificity binding to both an E-box motif (5'-ATCACGTGA-3') and to SRE-1 (5'-ATCACCCCAC-3'). Regulates transcription of genes related to cholesterol synthesis pathway. Regulates hepatic lipogenesis. This chain is Sterol regulatory element-binding protein 2, found in Rattus norvegicus (Rat).